We begin with the raw amino-acid sequence, 141 residues long: Hemoglobin subunit alpha (141 aa).

The Globin domain occupies 2–141 (AFTACEKQTI…ICQELSSRYR (140 aa)). His-59 is a binding site for O2. His-88 lines the heme b pocket.

The protein belongs to the globin family. As to quaternary structure, heterotetramer of two alpha chains and two beta chains. In terms of tissue distribution, red blood cells.

In terms of biological role, involved in oxygen transport from gills to the various peripheral tissues. The sequence is that of Hemoglobin subunit alpha (HBA) from Mustelus griseus (Spotless smooth-hound).